Here is a 730-residue protein sequence, read N- to C-terminus: Neuroligin-like protein glit-1 (730 aa).

The first 18 residues, M1–S18, serve as a signal peptide directing secretion. Over Q19–G663 the chain is Extracellular. 7 N-linked (GlcNAc...) asparagine glycosylation sites follow: N103, N320, N445, N512, N557, N564, and N604. The helical transmembrane segment at V664 to W684 threads the bilayer. Residues G685–L730 are Cytoplasmic-facing.

Belongs to the type-B carboxylesterase/lipase family. Expressed in the pharynx, intestine, and in several cells in the head including dopaminergic neurons.

The protein resides in the cell membrane. Functionally, probable neuronal cell surface protein thought to be involved in cell-cell-interactions. Confers protection against oxidative stress. Plays a role in protecting dopaminergic neurons against oxidative stress-induced neurodegeneration. The protein is Neuroligin-like protein glit-1 of Caenorhabditis elegans.